The chain runs to 202 residues: Pyridoxal 5'-phosphate synthase subunit PdxT (202 aa).

L-glutamine is bound at residue 52–54; the sequence is GES. The active-site Nucleophile is the C84. L-glutamine is bound by residues R120 and 148–149; that span reads IR. Residues H185 and E187 each act as charge relay system in the active site.

Belongs to the glutaminase PdxT/SNO family. In the presence of PdxS, forms a dodecamer of heterodimers. Only shows activity in the heterodimer.

The enzyme catalyses aldehydo-D-ribose 5-phosphate + D-glyceraldehyde 3-phosphate + L-glutamine = pyridoxal 5'-phosphate + L-glutamate + phosphate + 3 H2O + H(+). The catalysed reaction is L-glutamine + H2O = L-glutamate + NH4(+). It participates in cofactor biosynthesis; pyridoxal 5'-phosphate biosynthesis. Functionally, catalyzes the hydrolysis of glutamine to glutamate and ammonia as part of the biosynthesis of pyridoxal 5'-phosphate. The resulting ammonia molecule is channeled to the active site of PdxS. The chain is Pyridoxal 5'-phosphate synthase subunit PdxT from Methanopyrus kandleri (strain AV19 / DSM 6324 / JCM 9639 / NBRC 100938).